The chain runs to 306 residues: Nucleotide-binding protein RSal33209_2275 (306 aa).

Position 29–36 (29–36 (GMSGAGRS)) interacts with ATP. 80 to 83 (DVRG) is a GTP binding site.

Belongs to the RapZ-like family.

Displays ATPase and GTPase activities. The chain is Nucleotide-binding protein RSal33209_2275 from Renibacterium salmoninarum (strain ATCC 33209 / DSM 20767 / JCM 11484 / NBRC 15589 / NCIMB 2235).